The chain runs to 459 residues: ATP synthase subunit beta (459 aa).

148–155 (GGAGVGKT) is an ATP binding site.

This sequence belongs to the ATPase alpha/beta chains family. As to quaternary structure, F-type ATPases have 2 components, CF(1) - the catalytic core - and CF(0) - the membrane proton channel. CF(1) has five subunits: alpha(3), beta(3), gamma(1), delta(1), epsilon(1). CF(0) has three main subunits: a(1), b(2) and c(9-12). The alpha and beta chains form an alternating ring which encloses part of the gamma chain. CF(1) is attached to CF(0) by a central stalk formed by the gamma and epsilon chains, while a peripheral stalk is formed by the delta and b chains.

It is found in the cell inner membrane. It carries out the reaction ATP + H2O + 4 H(+)(in) = ADP + phosphate + 5 H(+)(out). Functionally, produces ATP from ADP in the presence of a proton gradient across the membrane. The catalytic sites are hosted primarily by the beta subunits. The protein is ATP synthase subunit beta of Ruthia magnifica subsp. Calyptogena magnifica.